The sequence spans 408 residues: Broad specificity amino-acid racemase (408 aa).

The signal sequence occupies residues 1–24 (MNFKKTLLSIAIASASLTPAFSYS). The cysteines at positions 71 and 97 are disulfide-linked. Lys-75 serves as the catalytic Proton acceptor. Lys-75 carries the N6-(pyridoxal phosphate)lysine modification. Arg-174 contributes to the substrate binding site. Tyr-300 acts as the Proton acceptor in catalysis. Met-348 contacts substrate.

It belongs to the alanine racemase family. Bsr subfamily. The cofactor is pyridoxal 5'-phosphate.

The protein localises to the periplasm. The enzyme catalyses an L-alpha-amino acid = a D-alpha-amino acid. It catalyses the reaction L-lysine = D-lysine. The catalysed reaction is L-arginine = D-arginine. In terms of biological role, amino-acid racemase able to utilize a broad range of substrates. This Vibrio vulnificus (strain CMCP6) protein is Broad specificity amino-acid racemase (alr).